A 156-amino-acid chain; its full sequence is dCTP deaminase (156 aa).

DCTP-binding positions include 79–84 (RSSLAR), Asp-95, Gln-124, and Tyr-138.

Belongs to the dCTP deaminase family. Homotrimer.

It catalyses the reaction dCTP + H2O + H(+) = dUTP + NH4(+). The protein operates within pyrimidine metabolism; dUMP biosynthesis; dUMP from dCTP (dUTP route): step 1/2. Its function is as follows. Catalyzes the deamination of dCTP to dUTP. This chain is dCTP deaminase, found in Pyrococcus furiosus (strain ATCC 43587 / DSM 3638 / JCM 8422 / Vc1).